The chain runs to 120 residues: NAD(P)H-quinone oxidoreductase subunit 3, chloroplastic (120 aa).

Helical transmembrane passes span 9-29 (IFWAFLIISSAIPFLAFLISG), 64-84 (MFALVFVVFDVETVFLYPWAM), and 88-108 (VLGVSAFIEAFVFVLILILGL).

The protein belongs to the complex I subunit 3 family. NDH is composed of at least 16 different subunits, 5 of which are encoded in the nucleus.

The protein resides in the plastid. Its subcellular location is the chloroplast thylakoid membrane. The enzyme catalyses a plastoquinone + NADH + (n+1) H(+)(in) = a plastoquinol + NAD(+) + n H(+)(out). The catalysed reaction is a plastoquinone + NADPH + (n+1) H(+)(in) = a plastoquinol + NADP(+) + n H(+)(out). Its function is as follows. NDH shuttles electrons from NAD(P)H:plastoquinone, via FMN and iron-sulfur (Fe-S) centers, to quinones in the photosynthetic chain and possibly in a chloroplast respiratory chain. The immediate electron acceptor for the enzyme in this species is believed to be plastoquinone. Couples the redox reaction to proton translocation, and thus conserves the redox energy in a proton gradient. In Aethionema grandiflorum (Persian stone-cress), this protein is NAD(P)H-quinone oxidoreductase subunit 3, chloroplastic.